A 196-amino-acid chain; its full sequence is Homeobox protein XENK-2 (196 aa).

The interval 48 to 72 (PSADESPDNDKELSSNPDSGKKRKR) is disordered. Positions 69 to 128 (KRKRRVLFSKAQTYELERRFRQQRYLSAPEREHLASLIRLTPTQVKIWFQNHRYKMKRAR) form a DNA-binding region, homeobox.

The protein belongs to the NK-2 homeobox family. Forebrain and midbrain.

The protein localises to the nucleus. Defines dorsal-ventral domains in developing brain. May play a role in defining positional information along the anterior-posterior (a/p) axis and the dorsal-ventral (d/v) axis of the developing nervous system. May be involved in determining positional or boundary information rather than determining a given cell type. This chain is Homeobox protein XENK-2, found in Xenopus laevis (African clawed frog).